Consider the following 643-residue polypeptide: 1-deoxy-D-xylulose-5-phosphate synthase (643 aa).

Thiamine diphosphate is bound by residues His72 and 113–115 (GHA). Asp144 contacts Mg(2+). Residues 145–146 (GA), Asn174, Tyr287, and Glu370 each bind thiamine diphosphate. Asn174 lines the Mg(2+) pocket.

Belongs to the transketolase family. DXPS subfamily. Homodimer. Requires Mg(2+) as cofactor. Thiamine diphosphate is required as a cofactor.

The catalysed reaction is D-glyceraldehyde 3-phosphate + pyruvate + H(+) = 1-deoxy-D-xylulose 5-phosphate + CO2. The protein operates within metabolic intermediate biosynthesis; 1-deoxy-D-xylulose 5-phosphate biosynthesis; 1-deoxy-D-xylulose 5-phosphate from D-glyceraldehyde 3-phosphate and pyruvate: step 1/1. In terms of biological role, catalyzes the acyloin condensation reaction between C atoms 2 and 3 of pyruvate and glyceraldehyde 3-phosphate to yield 1-deoxy-D-xylulose-5-phosphate (DXP). The sequence is that of 1-deoxy-D-xylulose-5-phosphate synthase from Synechococcus sp. (strain CC9605).